Consider the following 533-residue polypeptide: Calcium-dependent protein kinase 19 (533 aa).

Polar residues-rich tracts occupy residues 1–12 (MGSCCSRATSPD) and 24–38 (SHQT…SYNH). A disordered region spans residues 1 to 53 (MGSCCSRATSPDSGRGGANGYGYSHQTKPAQTTPSYNHPQPPPPAEVRYTPSA). Gly-2 carries N-myristoyl glycine lipidation. A Protein kinase domain is found at 85 to 343 (YSLGKELGRG…SAQVLQHPWL (259 aa)). ATP contacts are provided by residues 91–99 (LGRGQFGVT) and Lys-114. The active-site Proton acceptor is the Asp-209. An autoinhibitory domain region spans residues 348-378 (ASDKPIDSAVLSRMKQFRAMNKLKKMALKVI). EF-hand domains are found at residues 385 to 420 (EEIK…LGSK), 421 to 456 (LSEA…RHKL), 457 to 492 (ERDE…HEMG), and 497 to 527 (IKDI…GGMQ). The Ca(2+) site is built by Asp-398, Asp-400, Ser-402, Thr-404, Glu-409, Asp-434, Asp-436, Asn-438, Ser-440, Glu-445, Asp-470, Asp-472, Ser-474, Glu-481, Asp-505, Asp-507, Asp-509, Arg-511, and Glu-516.

Belongs to the protein kinase superfamily. Ser/Thr protein kinase family. CDPK subfamily. In terms of tissue distribution, expressed in root tips, leaf veins, mesophyll cells, flower reproductive organs and mature pollen grains.

The protein resides in the membrane. It catalyses the reaction L-seryl-[protein] + ATP = O-phospho-L-seryl-[protein] + ADP + H(+). It carries out the reaction L-threonyl-[protein] + ATP = O-phospho-L-threonyl-[protein] + ADP + H(+). Activated by calcium. Autophosphorylation may play an important role in the regulation of the kinase activity. In terms of biological role, may play a role in signal transduction pathways that involve calcium as a second messenger. This is Calcium-dependent protein kinase 19 from Oryza sativa subsp. japonica (Rice).